The primary structure comprises 495 residues: MGQFISFMQEIPIFLQEALNIALVAVSLICIVKGLVNLYRCGLFQLMVFLVLAGRSCSEETFKIGMHTKFQEVSLSLSALLTNQSHELPMLCLANKTHLYLKSGRSSFKINIDSVTVLTRSEVNLTSINLTRSIDVFVHSPKLGSCFESDEEWVVAWWIEAIGHRWDQDPGLLCRNKTKTEGKLIQINISRADGNVHYGWRLKNGLDHIYRGREEPCFEGEQCLIKIQPEDWPTDCKADHTNTFRFLSRSQKSIAVGRTLKAFFSWSLTDPLGNEAPGGYCLEKWMLVASELKCFGNTAIAKCNQNHDSEFCDMLRLFDYNKNAIKTLNEETKTRVNVLSHTINALISDNLLMKNKIRELMSVPYCNYTRFWYVNHTLSGQHSLPRCWMIRNNSYLNSSEFRNEWILESDFLISEMLGKEYSERQGRTPITLVDICFWSTVFFTSTLFLHLIGFPTHEHIRGEGCPLPHRLNSMGGCRCGKYLPLKKPTIWHRRH.

Glycine 2 carries the N-myristoyl glycine; by host lipid modification. Topologically, residues 2–17 (GQFISFMQEIPIFLQE) are extracellular. Residues 18–33 (ALNIALVAVSLICIVK) form a helical membrane-spanning segment. Over 34-58 (GLVNLYRCGLFQLMVFLVLAGRSCS) the chain is Cytoplasmic. Residue cysteine 57 participates in Zn(2+) binding. Topologically, residues 59–434 (EETFKIGMHT…QGRTPITLVD (376 aa)) are extracellular. 4 disulfide bridges follow: cysteine 92/cysteine 236, cysteine 281/cysteine 294, cysteine 303/cysteine 312, and cysteine 366/cysteine 387. Residues asparagine 95 and asparagine 188 are each glycosylated (N-linked (GlcNAc...) asparagine; by host). N-linked (GlcNAc...) asparagine; by host glycans are attached at residues asparagine 367, asparagine 375, asparagine 392, and asparagine 397. Residues 435-455 (ICFWSTVFFTSTLFLHLIGFP) traverse the membrane as a helical segment. Topologically, residues 456-495 (THEHIRGEGCPLPHRLNSMGGCRCGKYLPLKKPTIWHRRH) are cytoplasmic. Positions 457, 459, 465, 469, 477, 479, and 495 each coordinate Zn(2+).

Belongs to the arenaviridae GPC protein family. As to quaternary structure, interacts with glycoprotein G2. Part of the GP complex (GP-C) together with glycoprotein G1 and glycoprotein G2. The GP-complex interacts with protein Z, which interacts with ribonucleocapsid; these interactions may induce virion budding. Homotrimer; disulfide-linked. In pre-fusion state, G1 homotrimers bind G2 homotrimers via ionic interactions. Part of the GP complex (GP-C) together with glycoprotein G2 and the stable signal peptide. The GP-complex interacts with protein Z, which interacts with ribonucleocapsid; these interactions may induce virion budding. In terms of assembly, homotrimer. Interacts with the stable signal peptide. In pre-fusion state, G2 homotrimers bind G1 homotrimers via ionic interactions. Part of the GP complex (GP-C) together with glycoprotein G1 and the stable signal peptide. Acidification in the endosome triggers rearrangements, which ultimately leads to a 6 helix bundle formed by the two heptad repeat domains (HR1 and HR2) in post-fusion state. The GP-complex interacts with protein Z, which interacts with ribonucleocapsid; these interactions may induce virion budding. Post-translationally, specific enzymatic cleavages in vivo yield mature proteins. GP-C polyprotein is cleaved in the endoplasmic reticulum by the host protease MBTPS1. Only cleaved glycoprotein is incorporated into virions. In terms of processing, the SSP remains stably associated with the GP complex following cleavage by signal peptidase and plays crucial roles in the trafficking of GP through the secretory pathway. Myristoylation is necessary for GP2-mediated fusion activity.

The protein resides in the virion membrane. Its subcellular location is the host endoplasmic reticulum membrane. It is found in the host Golgi apparatus membrane. The protein localises to the host cell membrane. Functions as a cleaved signal peptide that is retained as the third component of the GP complex (GP-C). Helps to stabilize the spike complex in its native conformation. The SSP is required for efficient glycoprotein expression, post-translational maturation cleavage of G1 and G2, glycoprotein transport to the cell surface plasma membrane, formation of infectious virus particles, and acid pH-dependent glycoprotein-mediated cell fusion. Its function is as follows. Forms the virion spikes together with glycoprotein G2. The glycoprotein spike trimers are connected to the underlying matrix. Interacts with the host receptor leading to virus endocytosis. In terms of biological role, forms the virion spikes together with glycoprotein G1. The glycoprotein spike trimers are connected to the underlying matrix. Class I viral fusion protein that directs fusion of viral and host endosomal membranes, leading to delivery of the nucleocapsid into the cytoplasm. Membrane fusion is mediated by irreversible conformational changes induced by acidification. This is Pre-glycoprotein polyprotein GP complex from Tacaribe virus (strain Franze-Fernandez) (TCRV).